Consider the following 28-residue polypeptide: Heat shock protein 81 (28 aa).

Positions 5 and 21 each coordinate ATP.

Belongs to the heat shock protein 90 family. As to quaternary structure, homodimer.

It localises to the cytoplasm. Functionally, putative molecular chaperone that may promote the maturation, structural maintenance and proper regulation of specific target proteins. This Pseudotsuga menziesii (Douglas-fir) protein is Heat shock protein 81.